The primary structure comprises 2050 residues: Unconventional myosin-XVIIIa (2050 aa).

2 stretches are compositionally biased toward basic and acidic residues: residues 1 to 17 (MFNL…GRKE) and 23 to 34 (EKKERMSAAELR). The segment at 1–34 (MFNLMKKDKDKDGGRKEKKEKKEKKERMSAAELR) is disordered. Positions 1–398 (MFNLMKKDKD…LDVDEDDIEK (398 aa)) are mediates nucleotide-independent binding to F-actin and interaction with GOLPH3. 4 positions are modified to phosphoserine: Ser-35, Ser-52, Ser-72, and Ser-74. Residue Thr-79 is modified to Phosphothreonine. A phosphoserine mark is found at Ser-83 and Ser-98. The residue at position 99 (Thr-99) is a Phosphothreonine. Residues Ser-102 and Ser-103 each carry the phosphoserine modification. An Interaction with actin motif is present at residues 114–118 (RGSVL). Residues Ser-140, Ser-145, Ser-157, Ser-160, Ser-164, Ser-234, and Ile-340 each carry the phosphoserine modification. Residues 140–167 (SFSQRSRDESASETSTPSEHSAAPSPQV) are disordered. Positions 220–311 (ELELQRRPTG…SVRLKVQPIP (92 aa)) constitute a PDZ domain. The 53-residue stretch at 349-401 (TEKVWLVHRDGFSLASQLKSEELSLPEGKARVKLDHDGAILDVDEDDIEKANA) folds into the Myosin N-terminal SH3-like domain. In terms of domain architecture, Myosin motor spans 405–1181 (DRLEDLASLV…TLARLEEQRD (777 aa)). An ATP-binding site is contributed by 498 to 505 (GSSGSGKT). Phosphoserine is present on residues Ser-983, Ser-1063, Ser-1064, and Ser-1066. The interval 1051–1071 (PGEPRSASSRRVSSSSELDLP) is disordered. Residues 1055 to 1066 (RSASSRRVSSSS) show a composition bias toward low complexity. Positions 1184–1213 (TSRHLTLFQAACRGYLARQHFKKRKIQDLA) constitute an IQ domain. Residues 1242-1967 (LIQVQLSEEQ…KKNKLEGDSD (726 aa)) adopt a coiled-coil conformation. Residues 1448–1477 (RNHELEKKQRRFDSELSQAHEETQREKLQR) form a disordered region. Ser-1636 bears the Phosphoserine mark. The disordered stretch occupies residues 1848-1897 (MEKLTEERDQRAAAENREKEQNKRLQRQLRDTKEEMSELARKEAEASRKK). Ser-1938, Ser-1966, Ser-1970, Ser-1994, Ser-1998, Ser-2002, Ser-2003, Ser-2016, Ser-2032, Ser-2037, and Ser-2039 each carry phosphoserine. Residues 1955–2050 (YQKKKNKLEG…TEAKLTETSA (96 aa)) form a disordered region. Thr-2041 bears the Phosphothreonine mark. The segment covering 2041–2050 (TEAKLTETSA) has biased composition (basic and acidic residues).

It belongs to the TRAFAC class myosin-kinesin ATPase superfamily. Myosin family. In terms of assembly, homodimer. Forms a tripartite complex with CDC42BPA/CDC42BPB and LURAP1 with the latter acting as an adapter connecting CDC42BPA/CDC42BPB and MYO18A. Binds F-actin; regulated by ADP and GOLPH3. Interacts with GOLPH3; the interaction is direct and may link Golgi membranes to the actin cytoskeleton. Interacts with JAK3. Interacts with MSR1 and CD14. Phosphorylated on tyrosine upon CSF1R activation. Isoform 6 is phosphorylated on Ser-340. As to expression, isoform 1; Expressed ubiquitously. Isoform 2: Specifically expressed in most hematopoietic cells. Isoform 3: Predominantly expressed in alveolar macrophages.

The protein resides in the golgi apparatus. The protein localises to the trans-Golgi network. It is found in the golgi outpost. Its subcellular location is the cytoplasm. It localises to the cytoskeleton. The protein resides in the microtubule organizing center. The protein localises to the endoplasmic reticulum-Golgi intermediate compartment. Functionally, may link Golgi membranes to the cytoskeleton and participate in the tensile force required for vesicle budding from the Golgi. Thereby, may play a role in Golgi membrane trafficking and could indirectly give its flattened shape to the Golgi apparatus. Alternatively, in concert with LURAP1 and CDC42BPA/CDC42BPB, has been involved in modulating lamellar actomyosin retrograde flow that is crucial to cell protrusion and migration. May be involved in the maintenance of the stromal cell architectures required for cell to cell contact. Regulates trafficking, expression, and activation of innate immune receptors on macrophages. Plays a role to suppress inflammatory responsiveness of macrophages via a mechanism that modulates CD14 trafficking. Acts as a receptor of surfactant-associated protein A (SFTPA1/SP-A) and plays an important role in internalization and clearance of SFTPA1-opsonized S.aureus by alveolar macrophages. Strongly enhances natural killer cell cytotoxicity. In Mus musculus (Mouse), this protein is Unconventional myosin-XVIIIa (Myo18a).